The primary structure comprises 753 residues: Rsm22-cox11 tandem protein 2, mitochondrial (753 aa).

A mitochondrion-targeting transit peptide spans 1–39 (MPILTCRYKILFLYNLRNCFTFQNQRCLIPYGTTTTIRW). Residues Cys-323, Cys-329, Cys-342, and Cys-430 each contribute to the [4Fe-4S] cluster site. Residues 571-591 (IYYLVAISIFALGLTYAAVPL) form a helical membrane-spanning segment. Residues 592 to 753 (YRLFCSKTGY…TNGNLLTKLN (162 aa)) are Mitochondrial intermembrane-facing.

In the N-terminal section; belongs to the methyltransferase superfamily. Rsm22 family. This sequence in the C-terminal section; belongs to the COX11/CtaG family. In terms of assembly, associates with the mitochondrial ribosome (mitoribosome). Only transiently interacts with the mitoribosome. Specific enzymatic cleavages in vivo by mitochondrial processing peptidase (MPP) yield mature proteins including rsm22-2 and cox11-2.

The protein localises to the mitochondrion. The protein resides in the mitochondrion inner membrane. Functionally, mitochondrial ribosome (mitoribosome) assembly factor. Binds at the interface of the head and body domains of the mitochondrial small ribosomal subunit (mt-SSU), occluding the mRNA channel and preventing compaction of the head domain towards the body. Probable inactive methyltransferase: retains the characteristic folding and ability to bind S-adenosyl-L-methionine, but it probably lost its methyltransferase activity. Its function is as follows. Exerts its effect at some terminal stage of cytochrome c oxidase synthesis, probably by being involved in the insertion of the copper B into subunit I. The protein is Rsm22-cox11 tandem protein 2, mitochondrial (cox1102) of Schizosaccharomyces pombe (strain 972 / ATCC 24843) (Fission yeast).